Here is a 265-residue protein sequence, read N- to C-terminus: Small ribosomal subunit protein uS2 (265 aa).

Belongs to the universal ribosomal protein uS2 family.

In Microcystis aeruginosa (strain NIES-843 / IAM M-2473), this protein is Small ribosomal subunit protein uS2.